A 129-amino-acid polypeptide reads, in one-letter code: Protein BEX2 (129 aa).

The disordered stretch occupies residues 1-38; it reads MESKVEQGVKNLNMENDHQEKEEKEEKPQDANKREPVV. Over residues 15-36 the composition is skewed to basic and acidic residues; that stretch reads ENDHQEKEEKEEKPQDANKREP. An Omega-N-methylarginine modification is found at Arg51. The disordered stretch occupies residues 108–129; it reads SLRAVSTDPPHHDHHDEFCLMP. A compositionally biased stretch (basic and acidic residues) spans 116–129; the sequence is PPHHDHHDEFCLMP. The segment at 118-122 is his cluster; sequence HHDHH. Cys126 provides a ligand contact to Zn(2+).

This sequence belongs to the BEX family. Interacts with LMO2, possibly leading to regulate the transcriptional activity of a DNA-binding complex containing LMO2. Interacts with OMP.

Its subcellular location is the nucleus. It is found in the cytoplasm. Its function is as follows. Regulator of mitochondrial apoptosis and G1 cell cycle. Regulates the level of PP2A regulatory subunit B and PP2A phosphatase activity. In absence of reductive stress, acts as a pseudosubstrate for the CRL2(FEM1B) complex: associates with FEM1B via zinc, thereby preventing association between FEM1B and its substrates. The polypeptide is Protein BEX2 (Bex2) (Rattus norvegicus (Rat)).